Here is a 95-residue protein sequence, read N- to C-terminus: Acylphosphatase (95 aa).

The Acylphosphatase-like domain maps to 7 to 93; sequence TWQLFAHGRV…QLFDRFDWLP (87 aa). Catalysis depends on residues Arg22 and Asn40.

The protein belongs to the acylphosphatase family.

The catalysed reaction is an acyl phosphate + H2O = a carboxylate + phosphate + H(+). The sequence is that of Acylphosphatase (acyP) from Cupriavidus metallidurans (strain ATCC 43123 / DSM 2839 / NBRC 102507 / CH34) (Ralstonia metallidurans).